The sequence spans 550 residues: Chaperonin GroEL 1 (550 aa).

Residues 30–33 (TLGP), Lys51, 87–91 (DGTTT), Gly415, and Asp496 each bind ATP.

Belongs to the chaperonin (HSP60) family. Forms a cylinder of 14 subunits composed of two heptameric rings stacked back-to-back. Interacts with the co-chaperonin GroES.

The protein resides in the cytoplasm. It catalyses the reaction ATP + H2O + a folded polypeptide = ADP + phosphate + an unfolded polypeptide.. In terms of biological role, together with its co-chaperonin GroES, plays an essential role in assisting protein folding. The GroEL-GroES system forms a nano-cage that allows encapsulation of the non-native substrate proteins and provides a physical environment optimized to promote and accelerate protein folding. This Rhodopseudomonas palustris (strain HaA2) protein is Chaperonin GroEL 1.